We begin with the raw amino-acid sequence, 254 residues long: Alcohol dehydrogenase 2 (254 aa).

10-33 lines the NAD(+) pocket; that stretch reads FVAGLGGIGFDTSREIVKSGPKNL. Serine 138 provides a ligand contact to substrate. The active-site Proton acceptor is tyrosine 151.

The protein belongs to the short-chain dehydrogenases/reductases (SDR) family. Homodimer.

It catalyses the reaction a primary alcohol + NAD(+) = an aldehyde + NADH + H(+). The enzyme catalyses a secondary alcohol + NAD(+) = a ketone + NADH + H(+). The sequence is that of Alcohol dehydrogenase 2 (Adh2) from Drosophila wheeleri (Fruit fly).